A 347-amino-acid polypeptide reads, in one-letter code: Glutamyl-Q tRNA(Asp) synthetase (347 aa).

L-glutamate contacts are provided by residues 31-35 (RFAPS) and Glu67. The 'HIGH' region motif lies at 34-44 (PSPTSALHLGN). Positions 121, 123, 143, and 147 each coordinate Zn(2+). Residues Tyr203 and Arg221 each contribute to the L-glutamate site. A 'KMSKS' region motif is present at residues 259–263 (RLSKS). Lys262 is an ATP binding site.

It belongs to the class-I aminoacyl-tRNA synthetase family. GluQ subfamily. Requires Zn(2+) as cofactor.

Its function is as follows. Catalyzes the tRNA-independent activation of glutamate in presence of ATP and the subsequent transfer of glutamate onto a tRNA(Asp). Glutamate is transferred on the 2-amino-5-(4,5-dihydroxy-2-cyclopenten-1-yl) moiety of the queuosine in the wobble position of the QUC anticodon. This is Glutamyl-Q tRNA(Asp) synthetase from Cutibacterium acnes (strain DSM 16379 / KPA171202) (Propionibacterium acnes).